The chain runs to 206 residues: Thymidylate kinase (206 aa).

An ATP-binding site is contributed by 11-18; it reads GIDGAGKT.

The protein belongs to the thymidylate kinase family.

The enzyme catalyses dTMP + ATP = dTDP + ADP. Its function is as follows. Phosphorylation of dTMP to form dTDP in both de novo and salvage pathways of dTTP synthesis. This chain is Thymidylate kinase, found in Burkholderia mallei (strain NCTC 10247).